Reading from the N-terminus, the 122-residue chain is LYR motif-containing protein 1 (122 aa).

This sequence belongs to the complex I LYR family. In terms of tissue distribution, high levels in adipose tissue.

The protein resides in the nucleus. Functionally, may promote cell proliferation and inhibition of apoptosis of preadipocytes. This is LYR motif-containing protein 1 (LYRM1) from Homo sapiens (Human).